The chain runs to 357 residues: uncharacterized protein (357 aa).

Ser72 is subject to Phosphoserine. Disordered stretches follow at residues 79 to 98 (GVNE…RPSR), 264 to 290 (QKQL…GASV), and 323 to 357 (ISDE…EPLK). Residues 324–335 (SDEDEEDEEEDS) are compositionally biased toward acidic residues.

This is an uncharacterized protein from Saccharomyces cerevisiae (strain ATCC 204508 / S288c) (Baker's yeast).